The chain runs to 162 residues: Transcription elongation factor GreA (162 aa).

Residues 45–75 (ENAEYEAAREKQAFIEGRIKELEDMAARAEI) are a coiled coil.

Belongs to the GreA/GreB family.

In terms of biological role, necessary for efficient RNA polymerase transcription elongation past template-encoded arresting sites. The arresting sites in DNA have the property of trapping a certain fraction of elongating RNA polymerases that pass through, resulting in locked ternary complexes. Cleavage of the nascent transcript by cleavage factors such as GreA or GreB allows the resumption of elongation from the new 3'terminus. GreA releases sequences of 2 to 3 nucleotides. In Rickettsia canadensis (strain McKiel), this protein is Transcription elongation factor GreA.